We begin with the raw amino-acid sequence, 332 residues long: Holliday junction branch migration complex subunit RuvB (332 aa).

The segment at 1 to 181 (MARILDNNVM…FGITGHMEYY (181 aa)) is large ATPase domain (RuvB-L). Residues L20, R21, G62, K65, T66, T67, 128–130 (EDF), R171, Y181, and R218 each bind ATP. Position 66 (T66) interacts with Mg(2+). Positions 182–252 (QEKDLTEIVE…ITDRALTMLD (71 aa)) are small ATPAse domain (RuvB-S). A head domain (RuvB-H) region spans residues 255-332 (REGLNYIDQK…RHLGYPYQNT (78 aa)). The DNA site is built by R291, R310, R312, and R315.

Belongs to the RuvB family. As to quaternary structure, homohexamer. Forms an RuvA(8)-RuvB(12)-Holliday junction (HJ) complex. HJ DNA is sandwiched between 2 RuvA tetramers; dsDNA enters through RuvA and exits via RuvB. An RuvB hexamer assembles on each DNA strand where it exits the tetramer. Each RuvB hexamer is contacted by two RuvA subunits (via domain III) on 2 adjacent RuvB subunits; this complex drives branch migration. In the full resolvosome a probable DNA-RuvA(4)-RuvB(12)-RuvC(2) complex forms which resolves the HJ.

The protein localises to the cytoplasm. It catalyses the reaction ATP + H2O = ADP + phosphate + H(+). In terms of biological role, the RuvA-RuvB-RuvC complex processes Holliday junction (HJ) DNA during genetic recombination and DNA repair, while the RuvA-RuvB complex plays an important role in the rescue of blocked DNA replication forks via replication fork reversal (RFR). RuvA specifically binds to HJ cruciform DNA, conferring on it an open structure. The RuvB hexamer acts as an ATP-dependent pump, pulling dsDNA into and through the RuvAB complex. RuvB forms 2 homohexamers on either side of HJ DNA bound by 1 or 2 RuvA tetramers; 4 subunits per hexamer contact DNA at a time. Coordinated motions by a converter formed by DNA-disengaged RuvB subunits stimulates ATP hydrolysis and nucleotide exchange. Immobilization of the converter enables RuvB to convert the ATP-contained energy into a lever motion, pulling 2 nucleotides of DNA out of the RuvA tetramer per ATP hydrolyzed, thus driving DNA branch migration. The RuvB motors rotate together with the DNA substrate, which together with the progressing nucleotide cycle form the mechanistic basis for DNA recombination by continuous HJ branch migration. Branch migration allows RuvC to scan DNA until it finds its consensus sequence, where it cleaves and resolves cruciform DNA. The sequence is that of Holliday junction branch migration complex subunit RuvB from Streptococcus pyogenes serotype M18 (strain MGAS8232).